The chain runs to 424 residues: MLDVKYLRNHFEEVKEKLLKRGEDLTNIDRFEELDKKRRELIAKAEELKNKRNEVSQQIAVLKREKKDADHLIAEMRDVGDRIKTMDDEIRQVEEELNALLLSIPNIPHESVPVGKSEEDNVEVRKWGEPRSFSFEPKPHWDIAEQLGILDFERAAKVTGSRFVFYKGLGARLERALINFMLDVHIEEFGYQEILPPYLVNRASMTGTGQLPKFEEDAFRIETDDYFLIPTAEVPVTNLHRDEILSAEDLPIYYVAYSACFRAEAGSAGRDTRGLIRQHQFNKVELVKFVKPEDSYDELEKLTNQAERILQLLGLPYRVVCLCTGDLGFSSAKTYDIEVWLPSYGTYREISSCSNFEAFQARRANIRFRREPKAKPEYVHTLNGSGLAIGRTVAAILENYQQEDGTVVIPEVLRPYMGNLEVIR.

231–233 (TAE) is an L-serine binding site. Residue 262–264 (RAE) participates in ATP binding. E285 serves as a coordination point for L-serine. 349–352 (EISS) is an ATP binding site. Position 385 (S385) interacts with L-serine.

Belongs to the class-II aminoacyl-tRNA synthetase family. Type-1 seryl-tRNA synthetase subfamily. Homodimer. The tRNA molecule binds across the dimer.

It localises to the cytoplasm. It carries out the reaction tRNA(Ser) + L-serine + ATP = L-seryl-tRNA(Ser) + AMP + diphosphate + H(+). The enzyme catalyses tRNA(Sec) + L-serine + ATP = L-seryl-tRNA(Sec) + AMP + diphosphate + H(+). It participates in aminoacyl-tRNA biosynthesis; selenocysteinyl-tRNA(Sec) biosynthesis; L-seryl-tRNA(Sec) from L-serine and tRNA(Sec): step 1/1. Functionally, catalyzes the attachment of serine to tRNA(Ser). Is also able to aminoacylate tRNA(Sec) with serine, to form the misacylated tRNA L-seryl-tRNA(Sec), which will be further converted into selenocysteinyl-tRNA(Sec). In Geobacillus sp. (strain WCH70), this protein is Serine--tRNA ligase.